Here is a 291-residue protein sequence, read N- to C-terminus: Probable cell wall amidase LytH (291 aa).

An N-terminal signal peptide occupies residues 1–40 (MKKIDSWLTKHGLKNRLTLVVIVIFIIFLILLFMFVNLSD). An SH3b domain is found at 41-105 (EDTGQITITE…WVAGWHTNLN (65 aa)). The MurNAc-LAA domain maps to 122–286 (IVLDPGHGGS…VEQAIVDGLK (165 aa)). A disordered region spans residues 123-147 (VLDPGHGGSDQGASSSTPSKSLEKN). Residues 133 to 142 (QGASSSTPSK) are compositionally biased toward polar residues.

This sequence belongs to the N-acetylmuramoyl-L-alanine amidase 3 family.

It localises to the secreted. In terms of biological role, probably involved in cell-wall metabolism. The protein is Probable cell wall amidase LytH (lytH) of Staphylococcus epidermidis (strain ATCC 35984 / DSM 28319 / BCRC 17069 / CCUG 31568 / BM 3577 / RP62A).